The sequence spans 359 residues: Probable dual-specificity RNA methyltransferase RlmN (359 aa).

Glu-91 functions as the Proton acceptor in the catalytic mechanism. Residues 97-329 (QHYGHSVCVT…KKNGVNCVVR (233 aa)) enclose the Radical SAM core domain. A disulfide bond links Cys-104 and Cys-340. [4Fe-4S] cluster-binding residues include Cys-111, Cys-115, and Cys-118. Residues 163–164 (GE), Ser-195, 218–220 (SLH), and Asn-296 each bind S-adenosyl-L-methionine. The S-methylcysteine intermediate role is filled by Cys-340.

Belongs to the radical SAM superfamily. RlmN family. Requires [4Fe-4S] cluster as cofactor.

Its subcellular location is the cytoplasm. It catalyses the reaction adenosine(2503) in 23S rRNA + 2 reduced [2Fe-2S]-[ferredoxin] + 2 S-adenosyl-L-methionine = 2-methyladenosine(2503) in 23S rRNA + 5'-deoxyadenosine + L-methionine + 2 oxidized [2Fe-2S]-[ferredoxin] + S-adenosyl-L-homocysteine. It carries out the reaction adenosine(37) in tRNA + 2 reduced [2Fe-2S]-[ferredoxin] + 2 S-adenosyl-L-methionine = 2-methyladenosine(37) in tRNA + 5'-deoxyadenosine + L-methionine + 2 oxidized [2Fe-2S]-[ferredoxin] + S-adenosyl-L-homocysteine. Functionally, specifically methylates position 2 of adenine 2503 in 23S rRNA and position 2 of adenine 37 in tRNAs. The polypeptide is Probable dual-specificity RNA methyltransferase RlmN (Streptococcus pyogenes serotype M5 (strain Manfredo)).